The chain runs to 244 residues: Phosphoadenosine 5'-phosphosulfate reductase (244 aa).

Cys-239 (nucleophile; cysteine thiosulfonate intermediate) is an active-site residue.

This sequence belongs to the PAPS reductase family. CysH subfamily.

Its subcellular location is the cytoplasm. The enzyme catalyses [thioredoxin]-disulfide + sulfite + adenosine 3',5'-bisphosphate + 2 H(+) = [thioredoxin]-dithiol + 3'-phosphoadenylyl sulfate. The protein operates within sulfur metabolism; hydrogen sulfide biosynthesis; sulfite from sulfate: step 3/3. Its function is as follows. Catalyzes the formation of sulfite from phosphoadenosine 5'-phosphosulfate (PAPS) using thioredoxin as an electron donor. The polypeptide is Phosphoadenosine 5'-phosphosulfate reductase (Shigella flexneri).